The chain runs to 99 residues: DNA-directed RNA polymerase subunit omega (99 aa).

Belongs to the RNA polymerase subunit omega family. In terms of assembly, the RNAP catalytic core consists of 2 alpha, 1 beta, 1 beta' and 1 omega subunit. When a sigma factor is associated with the core the holoenzyme is formed, which can initiate transcription.

The catalysed reaction is RNA(n) + a ribonucleoside 5'-triphosphate = RNA(n+1) + diphosphate. Its function is as follows. Promotes RNA polymerase assembly. Latches the N- and C-terminal regions of the beta' subunit thereby facilitating its interaction with the beta and alpha subunits. This chain is DNA-directed RNA polymerase subunit omega (rpoZ), found in Xylella fastidiosa (strain 9a5c).